We begin with the raw amino-acid sequence, 162 residues long: UPF0305 protein MmarC6_0221 (162 aa).

The protein belongs to the UPF0305 family.

This is UPF0305 protein MmarC6_0221 from Methanococcus maripaludis (strain C6 / ATCC BAA-1332).